Here is a 250-residue protein sequence, read N- to C-terminus: Snake venom serine protease pictobin (250 aa).

Residues 1-11 form the signal peptide; that stretch reads ANLLILQVSYA. A propeptide spanning residues 12 to 17 is cleaved from the precursor; it reads QKSSEL. A Peptidase S1 domain is found at 18–241; the sequence is VIGGDECNIN…HLHWILSIIA (224 aa). 5 disulfides stabilise this stretch: C24/C155, C42/C58, C134/C202, C166/C181, and C192/C217. H57 acts as the Charge relay system in catalysis. 2 N-linked (GlcNAc...) asparagine glycosylation sites follow: N71 and N95. D102 functions as the Charge relay system in the catalytic mechanism. N-linked (GlcNAc...) asparagine glycosylation is found at N146 and N162. The active-site Charge relay system is S196. An N-linked (GlcNAc...) asparagine glycan is attached at N243.

It belongs to the peptidase S1 family. Snake venom subfamily. As to quaternary structure, monomer. Expressed by the venom gland.

Its subcellular location is the secreted. Functionally, snake venom serine protease that may impair the hemostatic system of the prey. This is Snake venom serine protease pictobin from Bothrops pictus (Desert lancehead).